A 259-amino-acid polypeptide reads, in one-letter code: DNA-directed RNA polymerase subunit Rpo3 (259 aa).

Belongs to the archaeal Rpo3/eukaryotic RPB3 RNA polymerase subunit family. In terms of assembly, part of the RNA polymerase complex.

It localises to the cytoplasm. The catalysed reaction is RNA(n) + a ribonucleoside 5'-triphosphate = RNA(n+1) + diphosphate. Functionally, DNA-dependent RNA polymerase (RNAP) catalyzes the transcription of DNA into RNA using the four ribonucleoside triphosphates as substrates. This chain is DNA-directed RNA polymerase subunit Rpo3, found in Thermococcus kodakarensis (strain ATCC BAA-918 / JCM 12380 / KOD1) (Pyrococcus kodakaraensis (strain KOD1)).